A 718-amino-acid chain; its full sequence is D-(-)-3-hydroxybutyrate oligomer hydrolase (718 aa).

S320 functions as the Charge relay system in the catalytic mechanism.

This sequence belongs to the D-(-)-3-hydroxybutyrate oligomer hydrolase family.

The protein resides in the cytoplasm. The enzyme catalyses (3R)-hydroxybutanoate dimer + H2O = 2 (R)-3-hydroxybutanoate + H(+). Its pathway is lipid metabolism; butanoate metabolism. Its activity is regulated as follows. Inhibited by diisopropylfluorophosphate (DFP). Participates in the degradation of poly-3-hydroxybutyrate (PHB). It works downstream of poly(3-hydroxybutyrate) depolymerase, hydrolyzing D(-)-3-hydroxybutyrate oligomers of various length (3HB-oligomers) into 3HB-monomers. Seems to have also poly(3-hydroxybutyrate) depolymerase activity since it is able to release 3HB-monomers from artificial amorphous PHB. The chain is D-(-)-3-hydroxybutyrate oligomer hydrolase (phaZ2) from Cupriavidus necator (strain ATCC 17699 / DSM 428 / KCTC 22496 / NCIMB 10442 / H16 / Stanier 337) (Ralstonia eutropha).